Reading from the N-terminus, the 180-residue chain is Large ribosomal subunit protein uL5 (180 aa).

The protein belongs to the universal ribosomal protein uL5 family. As to quaternary structure, part of the 50S ribosomal subunit; part of the 5S rRNA/L5/L18/L25 subcomplex. Contacts the 5S rRNA and the P site tRNA. Forms a bridge to the 30S subunit in the 70S ribosome.

Functionally, this is one of the proteins that bind and probably mediate the attachment of the 5S RNA into the large ribosomal subunit, where it forms part of the central protuberance. In the 70S ribosome it contacts protein S13 of the 30S subunit (bridge B1b), connecting the 2 subunits; this bridge is implicated in subunit movement. Contacts the P site tRNA; the 5S rRNA and some of its associated proteins might help stabilize positioning of ribosome-bound tRNAs. The protein is Large ribosomal subunit protein uL5 of Xanthomonas campestris pv. campestris (strain 8004).